Consider the following 138-residue polypeptide: Cytosolic calcium-binding protein 2 (138 aa).

The segment covering 31 to 41 (TEVTQQPEESV) has biased composition (low complexity). The interval 31–122 (TEVTQQPEES…KKTEVVEEKQ (92 aa)) is disordered. 6 tandem repeats follow at residues 62–68 (VEEAEKK), 71–75 (ETEKK), 92–98 (VEEEEKK), 109–114 (VEEEKK), 118–122 (VEEKQ), and 131–135 (VAVEK). Residues 62-135 (VEEAEKKDEE…AAAEEVAVEK (74 aa)) form a 6 X 5 AA approximate repeats of V-E-E-K-K region. Basic and acidic residues predominate over residues 64 to 85 (EAEKKDEETEKKTEEKDEKTEV). Residues 110 to 122 (EEEKKTEVVEEKQ) show a composition bias toward basic and acidic residues.

In terms of tissue distribution, predominantly expressed in roots (e.g. in endodermis in the stele) and stems, to a lower extent in shoots, flowers and siliques, and, at low levels, in leaves.

The protein resides in the cytoplasm. Its subcellular location is the cytosol. Binds calcium Ca(2+) and may act as a signal mediator to buffer Ca(2+). This is Cytosolic calcium-binding protein 2 from Arabidopsis thaliana (Mouse-ear cress).